Here is a 962-residue protein sequence, read N- to C-terminus: MREESWEEHDTIQLTAQRKYLAEVQALETLLARELSVFLTEPGSKKTNIINRITGKTYALPSTELLRLYEHLEQCRKQGALMYFLERQGTYSGLMLDYDLKLNTNAAPSLESSVLSRLCHRIFVHIKNSSVLPEGSHKIHFFFTLKPEAVQGKYGFHVLIPGLKMAASTKKSIIASLQHDATVQKILHEQGVANPESCLDPHSASVPSLLYGSSKLNHKPYQLKTGFELVFDSSDPDYIPIHQIKNIESYNLVSELSLTNEQGSLVRPVYCAADIAAEKEEEIPADDHSLSILMLHDPEARYLHKILNLLPPEYYVEYPLWSNVVFALANTSANYRPLAEWFSQKCPEKWNTGGKEKLEKLWNDASHHTEKKITKRSIMYWAHKHAPQQYKEIVEQGYFSILAEYVYSYNGTLEHYMIAKVIYAMMGNKFVVDVDSNGKYVWFEFVLPGQPMNQGEIWKWRKEVNPDELHIYISENFSRVMDRITEHIKYHLSQPHETNILNYYKKLLKAFERSKSKIFNDSFKKGVIRQAEFLFRQRSFIQTLDTNPHLLGVGNGVLSIETIPAKLINHFHEHPIHQYTHICYVPFNPENPWTKLLLNALQDIIPELDARLWIMFYLSTAIFRGLKEALMLLWLGGGCNGKTFLMRLVAMVLGDHYASKLNISLLTSYRETAEKPNSAFMRLKGRGYGYFEETNKSEVLNTSRLKEMVNPGDVTARELNQKQESFQMTATMVAASNYNFIIDTTDHGTWRRLRHYRSKVKFCHNPDPNNSYEKKEDPRFIHEYIMDPNCQNAFFSILVYFWEKLQKEYNGQIKKVFCPTIESETEAYRKSQDTLHRFITERVVESPSAETVYNLSEVVTAYAEWYNANINVKRHIALELSQELENSVLEKYLQWSPNKTRILKGCRILHKFETLQPGESYIGVSSTGTLLNTPICEPKNKWWEWSPNPSAPPEKEASAPTP.

The SF3 helicase domain maps to Glu607 to Lys775. Position 636–643 (Gly636–Thr643) interacts with ATP.

Belongs to the asfivirus helicase C962R family.

The protein is Putative primase C962R of African swine fever virus (isolate Pig/Kenya/KEN-50/1950) (ASFV).